A 236-amino-acid chain; its full sequence is UPF0502 protein Bcenmc03_4618 (236 aa).

This sequence belongs to the UPF0502 family.

The protein is UPF0502 protein Bcenmc03_4618 of Burkholderia orbicola (strain MC0-3).